The sequence spans 352 residues: Nicotinate-nucleotide--dimethylbenzimidazole phosphoribosyltransferase (352 aa).

The active-site Proton acceptor is E316.

Belongs to the CobT family.

It carries out the reaction 5,6-dimethylbenzimidazole + nicotinate beta-D-ribonucleotide = alpha-ribazole 5'-phosphate + nicotinate + H(+). Its pathway is nucleoside biosynthesis; alpha-ribazole biosynthesis; alpha-ribazole from 5,6-dimethylbenzimidazole: step 1/2. Functionally, catalyzes the synthesis of alpha-ribazole-5'-phosphate from nicotinate mononucleotide (NAMN) and 5,6-dimethylbenzimidazole (DMB). In Clostridium acetobutylicum (strain ATCC 824 / DSM 792 / JCM 1419 / IAM 19013 / LMG 5710 / NBRC 13948 / NRRL B-527 / VKM B-1787 / 2291 / W), this protein is Nicotinate-nucleotide--dimethylbenzimidazole phosphoribosyltransferase.